Here is a 132-residue protein sequence, read N- to C-terminus: Probable prefoldin subunit 4 (132 aa).

This sequence belongs to the prefoldin subunit beta family. As to quaternary structure, heterohexamer of two PFD-alpha type and four PFD-beta type subunits.

Its function is as follows. Binds specifically to cytosolic chaperonin (c-CPN) and transfers target proteins to it. Binds to nascent polypeptide chain and promotes folding in an environment in which there are many competing pathways for nonnative proteins. In Dictyostelium discoideum (Social amoeba), this protein is Probable prefoldin subunit 4 (pfdn4).